Consider the following 138-residue polypeptide: Ribosome-binding factor A (138 aa).

This sequence belongs to the RbfA family. In terms of assembly, monomer. Binds 30S ribosomal subunits, but not 50S ribosomal subunits or 70S ribosomes.

Its subcellular location is the cytoplasm. Functionally, one of several proteins that assist in the late maturation steps of the functional core of the 30S ribosomal subunit. Associates with free 30S ribosomal subunits (but not with 30S subunits that are part of 70S ribosomes or polysomes). Required for efficient processing of 16S rRNA. May interact with the 5'-terminal helix region of 16S rRNA. The polypeptide is Ribosome-binding factor A (Bradyrhizobium sp. (strain BTAi1 / ATCC BAA-1182)).